Here is a 348-residue protein sequence, read N- to C-terminus: Ileal sodium/bile acid cotransporter (348 aa).

Topologically, residues 1–28 (MDNSSICNPNATICEGDSCIAPESNFNA) are extracellular. N-linked (GlcNAc...) asparagine glycans are attached at residues Asn3 and Asn10. The helical transmembrane segment at 29–49 (ILSVVMSTVLTILLALVMFSM) threads the bilayer. The Cytoplasmic portion of the chain corresponds to 50–81 (GCNVELHKFLGHLRRPWGIVVGFLCQFGIMPL). Residues 82–102 (TGFVLSVAFGILPVQAVVVLI) form a helical membrane-spanning segment. The Extracellular segment spans residues 103 to 126 (QGCCPGGTASNILAYWVDGDMDLS). The chain crosses the membrane as a helical span at residues 127–147 (VSMTTCSTLLALGMMPLCLFI). The Cytoplasmic segment spans residues 148 to 157 (YTKMWVDSGT). Residues 158 to 178 (IVIPYDSIGTSLVALVIPVSI) form a helical membrane-spanning segment. The Extracellular portion of the chain corresponds to 179 to 195 (GMYVNHKWPQKAKIILK). The helical transmembrane segment at 196 to 216 (IGSIAGAILIVLIAVVGGILY) threads the bilayer. At 217 to 224 (QSAWTIEP) the chain is on the cytoplasmic side. A helical membrane pass occupies residues 225–245 (KLWIIGTIYPIAGYGLGFFLA). Over 246-284 (RIAGQPWYRCRTVALETGLQNTQLCSTIVQLSFSPEDLN) the chain is Extracellular. Residues 285 to 305 (LVFTFPLIYSIFQIAFAAILL) traverse the membrane as a helical segment. The Cytoplasmic segment spans residues 306 to 348 (GAYVAYKKCHGKNNTELQEKTDNEMEPRSSFQETNKGFQPDEK). The span at 322–332 (LQEKTDNEMEP) shows a compositional bias: basic and acidic residues. The tract at residues 322–348 (LQEKTDNEMEPRSSFQETNKGFQPDEK) is disordered. Residue Ser335 is modified to Phosphoserine.

This sequence belongs to the bile acid:sodium symporter (BASS) (TC 2.A.28) family. In terms of assembly, monomer and homodimer. Mainly expressed in ileum and kidney, lower expression in jejunum.

It localises to the membrane. It carries out the reaction taurocholate(out) + 2 Na(+)(out) = taurocholate(in) + 2 Na(+)(in). The catalysed reaction is cholate(out) + 2 Na(+)(out) = cholate(in) + 2 Na(+)(in). It catalyses the reaction taurochenodeoxycholate(out) + 2 Na(+)(out) = taurochenodeoxycholate(in) + 2 Na(+)(in). The enzyme catalyses tauroursodeoxycholate(out) + 2 Na(+)(out) = tauroursodeoxycholate(in) + 2 Na(+)(in). It carries out the reaction glycocholate(out) + 2 Na(+)(out) = glycocholate(in) + 2 Na(+)(in). The catalysed reaction is tauronorcholate(out) + 2 Na(+)(out) = tauronorcholate(in) + 2 Na(+)(in). It catalyses the reaction tauroallocholate(out) + 2 Na(+)(out) = tauroallocholate(in) + 2 Na(+)(in). The enzyme catalyses taurodeoxycholate(out) + 2 Na(+)(out) = taurodeoxycholate(in) + 2 Na(+)(in). It carries out the reaction tauro-beta-muricholate(out) + 2 Na(+)(out) = tauro-beta-muricholate(in) + 2 Na(+)(in). Its function is as follows. Plays a critical role in the sodium-dependent reabsorption of bile acids from the lumen of the small intestine. Transports various bile acids, unconjugated or conjugated, such as cholate and taurocholate. Also responsible for bile acid transport in the renal proximal tubules, a salvage mechanism that helps conserve bile acids. Works collaboratively with the Na(+)-taurocholate cotransporting polypeptide (NTCP), the organic solute transporter (OST), and the bile salt export pump (BSEP), to ensure efficacious biological recycling of bile acids during enterohepatic circulation. The protein is Ileal sodium/bile acid cotransporter (SLC10A2) of Cricetulus griseus (Chinese hamster).